A 678-amino-acid polypeptide reads, in one-letter code: Methionine--tRNA ligase (678 aa).

Residues 14–24 (PYANGSIHLGH) carry the 'HIGH' region motif. Zn(2+) contacts are provided by cysteine 145, cysteine 148, cysteine 158, and cysteine 161. Residues 331–335 (KMSKS) carry the 'KMSKS' region motif. Lysine 334 contributes to the ATP binding site. The region spanning 576–678 (AFAAVDLRIA…SGAKPGQRVK (103 aa)) is the tRNA-binding domain.

Belongs to the class-I aminoacyl-tRNA synthetase family. MetG type 1 subfamily. In terms of assembly, homodimer. The cofactor is Zn(2+).

It localises to the cytoplasm. It carries out the reaction tRNA(Met) + L-methionine + ATP = L-methionyl-tRNA(Met) + AMP + diphosphate. In terms of biological role, is required not only for elongation of protein synthesis but also for the initiation of all mRNA translation through initiator tRNA(fMet) aminoacylation. This chain is Methionine--tRNA ligase, found in Pseudomonas aeruginosa (strain UCBPP-PA14).